The sequence spans 203 residues: Dephospho-CoA kinase (203 aa).

The DPCK domain occupies 6-203 (ILGLTGGIGS…FYLTLRGGRA (198 aa)). 14–19 (GSGKSA) contributes to the ATP binding site.

The protein belongs to the CoaE family.

The protein localises to the cytoplasm. The catalysed reaction is 3'-dephospho-CoA + ATP = ADP + CoA + H(+). The protein operates within cofactor biosynthesis; coenzyme A biosynthesis; CoA from (R)-pantothenate: step 5/5. In terms of biological role, catalyzes the phosphorylation of the 3'-hydroxyl group of dephosphocoenzyme A to form coenzyme A. This chain is Dephospho-CoA kinase, found in Pseudomonas aeruginosa (strain ATCC 15692 / DSM 22644 / CIP 104116 / JCM 14847 / LMG 12228 / 1C / PRS 101 / PAO1).